Consider the following 92-residue polypeptide: Large ribosomal subunit protein eL42 (92 aa).

The Zn(2+) site is built by cysteine 11, cysteine 14, cysteine 70, and cysteine 73. The C4-type zinc finger occupies 11-73; it reads CPNCRKHTVH…LDLRLKCKEC (63 aa).

Belongs to the eukaryotic ribosomal protein eL42 family. In terms of assembly, part of the 50S ribosomal subunit. The cofactor is Zn(2+).

In terms of biological role, binds to the 23S rRNA. The chain is Large ribosomal subunit protein eL42 from Methanothermobacter thermautotrophicus (strain ATCC 29096 / DSM 1053 / JCM 10044 / NBRC 100330 / Delta H) (Methanobacterium thermoautotrophicum).